Consider the following 430-residue polypeptide: 3-phosphoshikimate 1-carboxyvinyltransferase (430 aa).

3-phosphoshikimate contacts are provided by Lys21, Ser22, and Arg26. A phosphoenolpyruvate-binding site is contributed by Lys21. Phosphoenolpyruvate-binding residues include Gly95 and Arg123. 3-phosphoshikimate contacts are provided by Thr167, Gln169, Asp315, and Lys342. Gln169 contributes to the phosphoenolpyruvate binding site. The active-site Proton acceptor is Asp315. Residues Arg346 and Arg390 each contribute to the phosphoenolpyruvate site.

The protein belongs to the EPSP synthase family. In terms of assembly, monomer.

It is found in the cytoplasm. It catalyses the reaction 3-phosphoshikimate + phosphoenolpyruvate = 5-O-(1-carboxyvinyl)-3-phosphoshikimate + phosphate. It functions in the pathway metabolic intermediate biosynthesis; chorismate biosynthesis; chorismate from D-erythrose 4-phosphate and phosphoenolpyruvate: step 6/7. Catalyzes the transfer of the enolpyruvyl moiety of phosphoenolpyruvate (PEP) to the 5-hydroxyl of shikimate-3-phosphate (S3P) to produce enolpyruvyl shikimate-3-phosphate and inorganic phosphate. The protein is 3-phosphoshikimate 1-carboxyvinyltransferase of Endomicrobium trichonymphae.